The sequence spans 403 residues: Synaptotagmin-7 (403 aa).

Residues 1–16 (MYRDPEAASPGAPSRD) lie on the Vesicular side of the membrane. Residues 17–37 (VLLVSAIITVSLSVTVVLCGL) form a helical membrane-spanning segment. Topologically, residues 38–403 (CHWCQRKLGK…PVAQWHQLKA (366 aa)) are cytoplasmic. Ser52 is subject to Phosphoserine. Residues 53–106 (LETVGTPDSGRGRSEKKAIKLPAGGKAVNTAPVPGQTPHDESDRRTEPRSSVSD) are disordered. Residue Thr58 is modified to Phosphothreonine. A Phosphoserine modification is found at Ser61. Residues 90–100 (PHDESDRRTEP) are compositionally biased toward basic and acidic residues. Ser119 and Ser122 each carry phosphoserine. 2 C2 domains span residues 135–255 (NLGR…TFWK) and 266–399 (SRGE…AQWH). Asp166, Asp172, Asp225, Asp227, Ser230, Asp233, Asp297, Asp303, Asp357, Asp359, Ser362, and Asp365 together coordinate Ca(2+).

It belongs to the synaptotagmin family. Homodimer. Can also form heterodimers with SYT6, SYT9 and SYT10. Interacts with calmodulin (CALM1, CALM2 or CALM3). Interacts with CD63; required for localization to lysosomes. Interacts with APP. Ca(2+) is required as a cofactor. In terms of processing, palmitoylated at its vesicular N-terminus; palmitoylation is required for localization to lysosome and phagocytosis in macrophages. Expressed in a variety of adult and fetal tissues.

The protein resides in the cell membrane. Its subcellular location is the presynaptic cell membrane. It localises to the cytoplasmic vesicle. The protein localises to the secretory vesicle. It is found in the synaptic vesicle membrane. The protein resides in the lysosome membrane. Its subcellular location is the phagosome membrane. It localises to the peroxisome membrane. The protein localises to the secretory vesicle membrane. In terms of biological role, ca(2+) sensor involved in Ca(2+)-dependent exocytosis of secretory and synaptic vesicles through Ca(2+) and phospholipid binding to the C2 domain. Ca(2+) induces binding of the C2-domains to phospholipid membranes and to assembled SNARE-complexes; both actions contribute to triggering exocytosis. SYT7 binds Ca(2+) with high affinity and slow kinetics compared to other synaptotagmins. Involved in Ca(2+)-triggered lysosomal exocytosis, a major component of the plasma membrane repair. Ca(2+)-regulated delivery of lysosomal membranes to the cell surface is also involved in the phagocytic uptake of particles by macrophages. Ca(2+)-triggered lysosomal exocytosis also plays a role in bone remodeling by regulating secretory pathways in osteoclasts and osteoblasts. In case of infection, involved in participates cell invasion by Trypanosoma cruzi via Ca(2+)-triggered lysosomal exocytosis. Involved in cholesterol transport from lysosome to peroxisome by promoting membrane contacts between lysosomes and peroxisomes: probably acts by promoting vesicle fusion by binding phosphatidylinositol-4,5-bisphosphate on peroxisomal membranes. Acts as a key mediator of synaptic facilitation, a process also named short-term synaptic potentiation: synaptic facilitation takes place at synapses with a low initial release probability and is caused by influx of Ca(2+) into the axon terminal after spike generation, increasing the release probability of neurotransmitters. Probably mediates synaptic facilitation by directly increasing the probability of release. May also contribute to synaptic facilitation by regulating synaptic vesicle replenishment, a process required to ensure that synaptic vesicles are ready for the arrival of the next action potential: SYT7 is required for synaptic vesicle replenishment by acting as a sensor for Ca(2+) and by forming a complex with calmodulin. Also acts as a regulator of Ca(2+)-dependent insulin and glucagon secretion in beta-cells. Triggers exocytosis by promoting fusion pore opening and fusion pore expansion in chromaffin cells. Also regulates the secretion of some non-synaptic secretory granules of specialized cells. In Homo sapiens (Human), this protein is Synaptotagmin-7.